The sequence spans 325 residues: Ribose-phosphate pyrophosphokinase (325 aa).

Residues 45 to 47 (NGE) and 104 to 105 (RQ) contribute to the ATP site. Mg(2+)-binding residues include H138 and D178. K202 is an active-site residue. D-ribose 5-phosphate is bound by residues R204, D230, and 234 to 238 (DTGGT).

This sequence belongs to the ribose-phosphate pyrophosphokinase family. Class I subfamily. In terms of assembly, homohexamer. Mg(2+) serves as cofactor.

The protein localises to the cytoplasm. The catalysed reaction is D-ribose 5-phosphate + ATP = 5-phospho-alpha-D-ribose 1-diphosphate + AMP + H(+). It functions in the pathway metabolic intermediate biosynthesis; 5-phospho-alpha-D-ribose 1-diphosphate biosynthesis; 5-phospho-alpha-D-ribose 1-diphosphate from D-ribose 5-phosphate (route I): step 1/1. In terms of biological role, involved in the biosynthesis of the central metabolite phospho-alpha-D-ribosyl-1-pyrophosphate (PRPP) via the transfer of pyrophosphoryl group from ATP to 1-hydroxyl of ribose-5-phosphate (Rib-5-P). The polypeptide is Ribose-phosphate pyrophosphokinase (Corynebacterium glutamicum (strain ATCC 13032 / DSM 20300 / JCM 1318 / BCRC 11384 / CCUG 27702 / LMG 3730 / NBRC 12168 / NCIMB 10025 / NRRL B-2784 / 534)).